A 434-amino-acid chain; its full sequence is Nucleobase transporter PlUacP (434 aa).

The next 12 helical transmembrane spans lie at 9–29 (LGFQHVLAMYAGAVIVPLIVG), 39–59 (LAYLVSIDLLTCGIATLLQVW), 63–83 (FFGIGLPVMLGCTFTAVGPMI), 93–113 (AIYGSVLASGLFLALFAGFFG), 118–138 (FFPPIVTGSVVTIIGITLIPV), 159–179 (ALSFGVLLFIILANRFFTGFI), 181–201 (AISILLGLIFGTIAGAFMGKV), 218–238 (FYFGFPTFHLPSILTMTLVAI), 306–326 (VVITAGFILVILGFMPKIAAL), 327–347 (TLLIPTAVLGGAMIAMFGMVV), 365–385 (LLIIACSVSVGLGVTVAPNLF), and 394–414 (ILTSNGIVAGSLTAILMNFLF).

It belongs to the nucleobase:cation symporter-2 (NCS2) (TC 2.A.40) family.

It localises to the cell membrane. Its activity is regulated as follows. Inhibited by the proton gradient disruptor carbonyl cyanide m-chlorophenylhydrazone (CCCP), but not by the sodium gradient disruptor ouabain. Hypoxanthine, xanthine, cytosine and uric acid act as competitive inhibitors. In terms of biological role, uptake of the purines adenine and guanine, and the pyrimidine uracil. Transport is probably proton-dependent. The polypeptide is Nucleobase transporter PlUacP (Paenibacillus larvae subsp. larvae (strain NRRL B-3650 / LMG 16245)).